We begin with the raw amino-acid sequence, 792 residues long: Zinc finger protein 606 (792 aa).

In terms of domain architecture, KRAB spans 62 to 133 (VTFKDVAVDF…EQACPQRTCP (72 aa)). The C2H2-type 1; degenerate zinc finger occupies 289–311 (FKCTDAVKSFNHIIHFGDHKGIH). The C2H2-type 2; degenerate zinc finger occupies 317–344 (YEYKECHQIFNQSPSFNEHPRLHVGENQ). Residues 400-422 (YDYNECGTSFIWSSYLIQHKKTH) form a C2H2-type 3; degenerate zinc finger. 13 consecutive C2H2-type zinc fingers follow at residues 428–450 (YECD…ERTH), 456–478 (YECN…KRIH), 484–506 (YVCN…QRTH), 512–534 (FECT…MRMH), 540–562 (FKCD…ERTH), 568–590 (YKCT…QRTH), 596–618 (YNCQ…EIIH), 624–646 (YECN…QRTH), 652–674 (YECN…RRIH), 680–702 (YKCN…RRTH), 708–730 (YRCN…LRNH), 736–758 (YKCN…QRMH), and 764–786 (FICS…QRNH).

This sequence belongs to the krueppel C2H2-type zinc-finger protein family. As to expression, widely expressed in adult and fetal tissues.

The protein resides in the nucleus. In terms of biological role, may act as a transcriptional repressor. The chain is Zinc finger protein 606 (ZNF606) from Homo sapiens (Human).